A 103-amino-acid chain; its full sequence is uncharacterized protein (103 aa).

The chain crosses the membrane as a helical span at residues 37-57; the sequence is FILLSSLLIGGLLITIACYHI.

Its subcellular location is the membrane. This is an uncharacterized protein from Saccharomyces cerevisiae (strain ATCC 204508 / S288c) (Baker's yeast).